The chain runs to 674 residues: Cysteine-rich receptor-like protein kinase 6 (674 aa).

Positions 1–24 are cleaved as a signal peptide; the sequence is MSSLISFNFLFLFSFLTSSFTASA. Residues 25 to 289 are Extracellular-facing; it reads QDPFYLNHYC…LPGKSGNSTV (265 aa). Gnk2-homologous domains follow at residues 28-132 and 139-245; these read FYLN…HKNI and NEGE…LYPF. Residues Asn-36, Asn-43, Asn-61, Asn-70, Asn-104, Asn-178, and Asn-247 are each glycosylated (N-linked (GlcNAc...) asparagine). Residues 254–266 are compositionally biased toward pro residues; the sequence is PPLPPPPPPPPPR. Residues 254–284 form a disordered region; that stretch reads PPLPPPPPPPPPRESLVSTPPISSSSLPGKS. A compositionally biased stretch (low complexity) spans 268–284; that stretch reads SLVSTPPISSSSLPGKS. A glycan (N-linked (GlcNAc...) asparagine) is linked at Asn-286. A helical transmembrane segment spans residues 290-310; the sequence is LVVAVVVLAVLLFIALVGYCF. The Cytoplasmic segment spans residues 311 to 674; sequence LAKKKKKTFD…DESITDLYPR (364 aa). The 287-residue stretch at 351–637 folds into the Protein kinase domain; that stretch reads FAESNKIGRG…TLPVPRQPGF (287 aa). ATP is bound by residues 357 to 365 and Lys-379; that span reads IGRGGFGEV. Tyr-424 carries the phosphotyrosine modification. The active-site Proton acceptor is Asp-476. The residue at position 480 (Ser-480) is a Phosphoserine. Phosphothreonine is present on Thr-516. Tyr-524 is subject to Phosphotyrosine. The segment at 648–674 is disordered; sequence LDSDQSTTTKSFPASIDDESITDLYPR. Polar residues predominate over residues 650 to 659; the sequence is SDQSTTTKSF.

This sequence belongs to the protein kinase superfamily. Ser/Thr protein kinase family. CRK subfamily.

Its subcellular location is the membrane. It carries out the reaction L-seryl-[protein] + ATP = O-phospho-L-seryl-[protein] + ADP + H(+). The catalysed reaction is L-threonyl-[protein] + ATP = O-phospho-L-threonyl-[protein] + ADP + H(+). The polypeptide is Cysteine-rich receptor-like protein kinase 6 (CRK6) (Arabidopsis thaliana (Mouse-ear cress)).